The sequence spans 287 residues: Probable ABC transporter extracellular-binding protein YckB (287 aa).

An N-terminal signal peptide occupies residues 1–24 (MKSFMHSKAVIFSFTMAFFLILAA). A lipid anchor (N-palmitoyl cysteine) is attached at Cys25. Cys25 is lipidated: S-diacylglycerol cysteine.

It belongs to the bacterial solute-binding protein 3 family.

The protein resides in the cell membrane. Functionally, probably part of a binding-protein-dependent transport system. This chain is Probable ABC transporter extracellular-binding protein YckB (yckB), found in Bacillus subtilis (strain 168).